The sequence spans 445 residues: Amino-acid acetyltransferase (445 aa).

The N-acetyltransferase domain maps to 299–438 (EQVRQAQIDD…QGLYNYQRNS (140 aa)).

Belongs to the acetyltransferase family. ArgA subfamily.

The protein localises to the cytoplasm. The catalysed reaction is L-glutamate + acetyl-CoA = N-acetyl-L-glutamate + CoA + H(+). Its pathway is amino-acid biosynthesis; L-arginine biosynthesis; N(2)-acetyl-L-ornithine from L-glutamate: step 1/4. This chain is Amino-acid acetyltransferase, found in Vibrio atlanticus (strain LGP32) (Vibrio splendidus (strain Mel32)).